A 406-amino-acid polypeptide reads, in one-letter code: Probable tRNA pseudouridine synthase D (406 aa).

The Nucleophile role is filled by Asp-77. One can recognise a TRUD domain in the interval 150-371 (GFPNYFGIQR…PGGRRELLIK (222 aa)).

Belongs to the pseudouridine synthase TruD family.

It carries out the reaction uridine(13) in tRNA = pseudouridine(13) in tRNA. Could be responsible for synthesis of pseudouridine from uracil-13 in transfer RNAs. The protein is Probable tRNA pseudouridine synthase D of Pyrococcus abyssi (strain GE5 / Orsay).